A 140-amino-acid polypeptide reads, in one-letter code: Organic hydroperoxide resistance protein-like (140 aa).

This sequence belongs to the OsmC/Ohr family.

The polypeptide is Organic hydroperoxide resistance protein-like (Mycoplasma pneumoniae (strain ATCC 29342 / M129 / Subtype 1) (Mycoplasmoides pneumoniae)).